Reading from the N-terminus, the 131-residue chain is Steroid Delta-isomerase (131 aa).

The active-site Proton donor is the Tyr16. Asp40 serves as the catalytic Proton acceptor. Substrate is bound at residue Asp103.

Homodimer.

It catalyses the reaction a 3-oxo-Delta(5)-steroid = a 3-oxo-Delta(4)-steroid. The protein is Steroid Delta-isomerase (ksi) of Pseudomonas putida (Arthrobacter siderocapsulatus).